The sequence spans 438 residues: Malic acid transport protein (438 aa).

The next 10 helical transmembrane spans lie at 37–57, 65–85, 106–126, 140–160, 172–192, 205–225, 242–262, 288–308, 321–341, and 353–373; these read SWFA…SFPF, IGKI…SCML, LFIA…AIYA, ILYY…FFTI, SPAW…AGAV, VIFG…LFAV, PGMF…INIA, FMAI…MVSF, ACGW…TIEI, and FGHI…YLMV. The interval 390-438 is disordered; the sequence is AHPPPKPNTGVLNPTFPPEKAPASLEKVDTHVTSTGGESDPPSSEHESV. S413, S423, S428, S432, S433, and S437 each carry phosphoserine.

This sequence belongs to the tellurite-resistance/dicarboxylate transporter (TDT) family.

It localises to the membrane. Its function is as follows. Permease for malate and other C4 dicarboxylic acids. The chain is Malic acid transport protein (mae1) from Schizosaccharomyces pombe (strain 972 / ATCC 24843) (Fission yeast).